Consider the following 390-residue polypeptide: Putative nickel insertion protein (390 aa).

Belongs to the LarC family.

This chain is Putative nickel insertion protein, found in Geobacter metallireducens (strain ATCC 53774 / DSM 7210 / GS-15).